We begin with the raw amino-acid sequence, 664 residues long: Semaphorin-7A (664 aa).

The signal sequence occupies residues 1-44; the sequence is MTPPPPGRAAPSAPRARVLSLPARFGLPLRLRLLLVFWVAAASA. One can recognise a Sema domain in the interval 53–488; that stretch reads RISAVWKGQD…SQWEVSQVPL (436 aa). An N-linked (GlcNAc...) asparagine glycan is attached at Asn102. Cys117 and Cys123 are oxidised to a cystine. Arg132 is modified (asymmetric dimethylarginine). Cysteines 140 and 149 form a disulfide. Asn154 and Asn256 each carry an N-linked (GlcNAc...) asparagine glycan. Cystine bridges form between Cys264–Cys364, Cys289–Cys333, Cys491–Cys509, Cys498–Cys539, Cys501–Cys516, Cys564–Cys611, and Cys585–Cys594. The interval 265–267 is interaction with integrins; sequence RGD. The short motif at 265-267 is the Cell attachment site element; that stretch reads RGD. Asn328 carries N-linked (GlcNAc...) asparagine glycosylation. Positions 542 to 627 constitute an Ig-like C2-type domain; that stretch reads PKPDEAPLQK…YLREAQHWEL (86 aa). The N-linked (GlcNAc...) asparagine glycan is linked to Asn600. Ala646 is lipidated: GPI-anchor amidated alanine. The propeptide at 647–664 is removed in mature form; it reads ASFWLGVLPTLILGLLVH.

This sequence belongs to the semaphorin family. In terms of assembly, interacts with PLXNC1. Interacts with ITGA1 and ITGB1. In terms of tissue distribution, highly expressed in activated T-cells (at protein level). Highest expression in brain. Lower in heart, thymus, spleen, testis and ovary. The expression increases in late embryonic and postnatal stages. Detected in T-cells.

The protein resides in the cell membrane. Plays an important role in integrin-mediated signaling and functions both in regulating cell migration and immune responses. Promotes formation of focal adhesion complexes, activation of the protein kinase PTK2/FAK1 and subsequent phosphorylation of MAPK1 and MAPK3. Promotes production of pro-inflammatory cytokines by monocytes and macrophages. Plays an important role in modulating inflammation and T-cell-mediated immune responses. Promotes axon growth in the embryonic olfactory bulb. Promotes attachment, spreading and dendrite outgrowth in melanocytes. This Mus musculus (Mouse) protein is Semaphorin-7A (Sema7a).